A 427-amino-acid chain; its full sequence is Trigger factor (427 aa).

Residues 163 to 248 (GDTVILDFEG…LHEIKTKEVP (86 aa)) enclose the PPIase FKBP-type domain.

It belongs to the FKBP-type PPIase family. Tig subfamily.

The protein localises to the cytoplasm. The catalysed reaction is [protein]-peptidylproline (omega=180) = [protein]-peptidylproline (omega=0). In terms of biological role, involved in protein export. Acts as a chaperone by maintaining the newly synthesized protein in an open conformation. Functions as a peptidyl-prolyl cis-trans isomerase. This is Trigger factor from Listeria monocytogenes serotype 4b (strain CLIP80459).